Here is a 142-residue protein sequence, read N- to C-terminus: Transcriptional regulator MraZ (142 aa).

SpoVT-AbrB domains are found at residues Ala-5–Val-51 and Ala-77–Lys-120.

The protein belongs to the MraZ family. In terms of assembly, forms oligomers.

Its subcellular location is the cytoplasm. It is found in the nucleoid. The sequence is that of Transcriptional regulator MraZ from Janthinobacterium sp. (strain Marseille) (Minibacterium massiliensis).